Consider the following 243-residue polypeptide: Probable transcriptional regulatory protein BPP2422 (243 aa).

The segment at 1–21 (MAGHSKWANIQHRKGRQDAKR) is disordered.

The protein belongs to the TACO1 family.

The protein localises to the cytoplasm. This is Probable transcriptional regulatory protein BPP2422 from Bordetella parapertussis (strain 12822 / ATCC BAA-587 / NCTC 13253).